A 442-amino-acid polypeptide reads, in one-letter code: Myb family transcription factor PHL13 (442 aa).

Residues 235–295 form the HTH myb-type domain; the sequence is MTSKQRMRWT…HLQKYRTARY (61 aa). Positions 266 to 291 form a DNA-binding region, H-T-H motif; the sequence is PKAVLKLINSPGLTVYHVKSHLQKYR. The interval 329 to 349 is coiled coil; the sequence is TEALRLQMKVQKQLHEQLEIQ. The LHEQLE signature appears at 342 to 347; sequence LHEQLE. The segment covering 370–380 has biased composition (basic and acidic residues); the sequence is QQKMQENKKDS. A disordered region spans residues 370–442; sequence QQKMQENKKD…TSNRKRVRED (73 aa). The span at 395–434 shows a compositional bias: polar residues; that stretch reads SPNLSQPFLHKATNSEPSITQKLQNGSSTMDQSESTSGTS.

This sequence belongs to the MYB-CC family.

The protein resides in the nucleus. In Arabidopsis thaliana (Mouse-ear cress), this protein is Myb family transcription factor PHL13.